The primary structure comprises 419 residues: uncharacterized protein (419 aa).

Residues 29 to 236 form the Obg domain; it reads PKFQDKIRIR…KLIELELKTI (208 aa). An OBG-type G domain is found at 237–414; the sequence is CEIGLVGLPN…LVRGMTQLLQ (178 aa). GTP contacts are provided by residues 243 to 250, 295 to 299, and 364 to 367; these read GLPNAGKS, DIPGI, and ANKA.

It belongs to the TRAFAC class OBG-HflX-like GTPase superfamily. OBG GTPase family.

The protein resides in the mitochondrion. This is an uncharacterized protein from Schizosaccharomyces pombe (strain 972 / ATCC 24843) (Fission yeast).